The primary structure comprises 241 residues: Alkylated DNA repair protein ALKBH6 homolog (241 aa).

Residues 87 to 232 (AINHVLINEY…RVSLTCRLVP (146 aa)) enclose the Fe2OG dioxygenase domain. Residues histidine 105, aspartate 107, and histidine 181 each contribute to the Fe cation site. Arginine 223 and arginine 229 together coordinate 2-oxoglutarate.

The protein belongs to the alkB family. It depends on Fe(2+) as a cofactor.

The protein localises to the nucleus. Functionally, probable RNA demethylase that binds to both N6-methyladenosine-containing- (m(6)A) and C5-methylcytidine-containing- (m(5)C) RNAs, thus being a probable m(6)A and m(5)C eraser. Involved in responses to abscisic acid (ABA) via the modulation of the expression of ABA signaling-related genes (e.g. ABI3 and ABI4). Acts as a negative regulator during seed germination under abiotic stresses (e.g. salt, cold and ABA). Positive modulator of seedling growth and survival in response to drought and heat, but counteracts tolerance to salt. In Arabidopsis thaliana (Mouse-ear cress), this protein is Alkylated DNA repair protein ALKBH6 homolog.